A 134-amino-acid polypeptide reads, in one-letter code: Arsenate reductase (134 aa).

Residues C11, C83, and C90 each act as nucleophile in the active site. 2 disulfides stabilise this stretch: C11/C83 and C83/C90.

It belongs to the low molecular weight phosphotyrosine protein phosphatase family. Thioredoxin-coupled ArsC subfamily.

Its subcellular location is the cytoplasm. It carries out the reaction arsenate + [thioredoxin]-dithiol + H(+) = arsenite + [thioredoxin]-disulfide + H2O. Its function is as follows. Catalyzes the reduction of arsenate [As(V)] to arsenite [As(III)]. This chain is Arsenate reductase, found in Bacillus cereus (strain ATCC 14579 / DSM 31 / CCUG 7414 / JCM 2152 / NBRC 15305 / NCIMB 9373 / NCTC 2599 / NRRL B-3711).